Consider the following 254-residue polypeptide: Phosphoglycerate mutase 1 (254 aa).

Substrate contacts are provided by residues 10-17 (RHGESAWN) and 23-24 (SG). The Tele-phosphohistidine intermediate role is filled by histidine 11. Phosphoserine is present on residues serine 14 and serine 23. Tyrosine 26 carries the post-translational modification Phosphotyrosine. Serine 31 carries the post-translational modification Phosphoserine. Residues arginine 62, 89–92 (ERHY), and lysine 100 each bind substrate. Glutamate 89 functions as the Proton donor/acceptor in the catalytic mechanism. Residue lysine 106 is modified to N6-acetyllysine. 116-117 (RR) provides a ligand contact to substrate. Serine 118 carries the post-translational modification Phosphoserine. Residue 187 to 188 (GN) coordinates substrate. Lysine 251 is modified (N6-acetyllysine; alternate). Lysine 251 bears the N6-succinyllysine; alternate mark. N6-acetyllysine occurs at positions 253 and 254.

Belongs to the phosphoglycerate mutase family. BPG-dependent PGAM subfamily. In terms of assembly, homodimer. Acetylated at Lys-253, Lys-253 and Lys-254 under high glucose condition. Acetylation increases catalytic activity. Under glucose restriction SIRT1 levels dramatically increase and it deacetylates the enzyme.

The enzyme catalyses (2R)-2-phosphoglycerate = (2R)-3-phosphoglycerate. It catalyses the reaction (2R)-3-phospho-glyceroyl phosphate = (2R)-2,3-bisphosphoglycerate + H(+). In terms of biological role, catalyzes the interconversion of 2-phosphoglycerate and 3-phosphoglyceratea crucial step in glycolysis, by using 2,3-bisphosphoglycerate. Also catalyzes the interconversion of (2R)-2,3-bisphosphoglycerate and (2R)-3-phospho-glyceroyl phosphate. This Mus musculus (Mouse) protein is Phosphoglycerate mutase 1.